Consider the following 312-residue polypeptide: Ribosomal RNA small subunit methyltransferase H (312 aa).

Residues 35 to 37 (GGH), Asp-55, Phe-85, Asp-101, and Gln-108 contribute to the S-adenosyl-L-methionine site.

This sequence belongs to the methyltransferase superfamily. RsmH family.

Its subcellular location is the cytoplasm. It carries out the reaction cytidine(1402) in 16S rRNA + S-adenosyl-L-methionine = N(4)-methylcytidine(1402) in 16S rRNA + S-adenosyl-L-homocysteine + H(+). In terms of biological role, specifically methylates the N4 position of cytidine in position 1402 (C1402) of 16S rRNA. The chain is Ribosomal RNA small subunit methyltransferase H from Buchnera aphidicola subsp. Acyrthosiphon pisum (strain Tuc7).